The following is a 363-amino-acid chain: SWIRM domain-containing protein YOR338W (363 aa).

2 disordered regions span residues 1–22 (MLDN…GGIN) and 186–208 (LYED…VPVR). Residues 186–196 (LYEDDGNRSEN) show a composition bias toward basic and acidic residues. One can recognise an SWIRM domain in the interval 266–363 (LKVEWKGSPM…LQDKHFEKYL (98 aa)).

The sequence is that of SWIRM domain-containing protein YOR338W from Saccharomyces cerevisiae (strain ATCC 204508 / S288c) (Baker's yeast).